The following is a 702-amino-acid chain: Pheromone-processing carboxypeptidase KEX1 (702 aa).

The N-terminal stretch at 1–19 (MKLILSTLIVFIHTLLVSA) is a signal peptide. The Lumenal portion of the chain corresponds to 20 to 555 (LPTKEGSDPN…SDSTSSKFTR (536 aa)). 2 N-linked (GlcNAc...) asparagine glycosylation sites follow: asparagine 85 and asparagine 122. Residues serine 184 and aspartate 394 contribute to the active site. Asparagine 441 and asparagine 449 each carry an N-linked (GlcNAc...) asparagine glycan. Residue histidine 452 is part of the active site. Residues 491 to 548 (SRKESDASADGEENAGSDKVPGDSPSQTIDPMISSSTASSSSVESSLSSSTASADSDS) are disordered. A compositionally biased stretch (low complexity) spans 524–548 (SSSTASSSSVESSLSSSTASADSDS). Residues 556–576 (LIQLAVILVIFWGVYVLYASY) traverse the membrane as a helical segment. At 577 to 702 (KSRPSSIIKK…THNQKQKPMN (126 aa)) the chain is on the cytoplasmic side. Disordered regions lie at residues 582 to 603 (SIIK…GKKK) and 660 to 702 (IELG…KPMN). Polar residues-rich tracts occupy residues 587 to 598 (PTNNTSNVTRSS) and 692 to 702 (ATHNQKQKPMN).

The protein belongs to the peptidase S10 family.

The protein resides in the golgi apparatus. The protein localises to the trans-Golgi network membrane. It catalyses the reaction Preferential release of a C-terminal arginine or lysine residue.. Functionally, protease with a carboxypeptidase B-like function involved in the C-terminal processing of the lysine and arginine residues from protein precursors. Promotes cell fusion and is involved in the programmed cell death. This Candida albicans (strain SC5314 / ATCC MYA-2876) (Yeast) protein is Pheromone-processing carboxypeptidase KEX1 (KEX1).